A 1051-amino-acid chain; its full sequence is Ubiquitin carboxyl-terminal hydrolase 28 (1051 aa).

The disordered stretch occupies residues aspartate 60–alanine 82. Serine 67 is subject to Phosphoserine. A UIM domain is found at aspartate 97 to isoleucine 116. A Glycyl lysine isopeptide (Lys-Gly) (interchain with G-Cter in SUMO2) cross-link involves residue lysine 99. A compositionally biased stretch (basic and acidic residues) spans arginine 121–lysine 135. The disordered stretch occupies residues arginine 121–lysine 140. In terms of domain architecture, USP spans valine 162–aspartate 655. The Nucleophile role is filled by cysteine 171. Serine 376 is modified (phosphoserine). The tract at residues aspartate 483–valine 538 is disordered. 2 stretches are compositionally biased toward polar residues: residues lysine 487 to serine 505 and proline 519 to glutamate 528. Serine 555 carries the post-translational modification Phosphoserine. The active-site Proton acceptor is histidine 605. The tract at residues glutamate 703–histidine 735 is disordered. The span at glutamate 713–proline 730 shows a compositional bias: low complexity. Serine 720 bears the Phosphoserine mark. Position 1022 is a phosphothreonine (threonine 1022).

The protein belongs to the peptidase C19 family. USP28 subfamily. Interacts with ZNF304. Interacts with PRKD1. Interacts with TP53BP1. Interacts with FBXW7; following DNA damage, dissociates from FBXW7 leading to degradation of MYC. Post-translationally, degraded upon nickel ion level or hypoxia exposure. Phosphorylated upon DNA damage at Ser-67 and Ser-720, by ATM or ATR. Phosphorylated by PRKD1.

The protein localises to the nucleus. Its subcellular location is the nucleoplasm. The catalysed reaction is Thiol-dependent hydrolysis of ester, thioester, amide, peptide and isopeptide bonds formed by the C-terminal Gly of ubiquitin (a 76-residue protein attached to proteins as an intracellular targeting signal).. Deubiquitinase involved in DNA damage response checkpoint and MYC proto-oncogene stability. Involved in DNA damage induced apoptosis by specifically deubiquitinating proteins of the DNA damage pathway such as CLSPN. Also involved in G2 DNA damage checkpoint, by deubiquitinating CLSPN, and preventing its degradation by the anaphase promoting complex/cyclosome (APC/C). In contrast, it does not deubiquitinate PLK1. Specifically deubiquitinates MYC in the nucleoplasm, leading to prevent MYC degradation by the proteasome: acts by specifically interacting with FBXW7 (FBW7alpha) in the nucleoplasm and counteracting ubiquitination of MYC by the SCF(FBXW7) complex. Deubiquitinates ZNF304, hence preventing ZNF304 degradation by the proteasome and leading to the activated KRAS-mediated promoter hypermethylation and transcriptional silencing of tumor suppressor genes (TSGs) in a subset of colorectal cancers (CRC) cells. In Mus musculus (Mouse), this protein is Ubiquitin carboxyl-terminal hydrolase 28 (Usp28).